Reading from the N-terminus, the 238-residue chain is Large ribosomal subunit protein uL1 (238 aa).

It belongs to the universal ribosomal protein uL1 family. As to quaternary structure, part of the 50S ribosomal subunit.

Functionally, binds directly to 23S rRNA. The L1 stalk is quite mobile in the ribosome, and is involved in E site tRNA release. Protein L1 is also a translational repressor protein, it controls the translation of the L11 operon by binding to its mRNA. This is Large ribosomal subunit protein uL1 from Saccharopolyspora erythraea (strain ATCC 11635 / DSM 40517 / JCM 4748 / NBRC 13426 / NCIMB 8594 / NRRL 2338).